The primary structure comprises 1025 residues: Multidrug resistance protein MdtC (1025 aa).

A run of 12 helical transmembrane segments spans residues Phe-3–Leu-23, Glu-333–Leu-353, Ile-360–Cys-380, Leu-387–Leu-407, Val-431–Leu-451, Phe-463–Pro-483, Leu-528–Pro-548, Val-853–Ser-873, Val-875–Leu-895, Leu-897–Val-917, Pro-953–Gly-973, and Ile-984–Val-1004.

It belongs to the resistance-nodulation-cell division (RND) (TC 2.A.6) family. MdtC subfamily. As to quaternary structure, part of a tripartite efflux system composed of MdtA, MdtB and MdtC. MdtC forms a heteromultimer with MdtB.

It is found in the cell inner membrane. Its function is as follows. The MdtABC tripartite complex confers resistance against novobiocin and deoxycholate. The protein is Multidrug resistance protein MdtC of Escherichia coli (strain UTI89 / UPEC).